Reading from the N-terminus, the 252-residue chain is Probable transcriptional regulatory protein Moth_1704 (252 aa).

This sequence belongs to the TACO1 family.

It localises to the cytoplasm. The polypeptide is Probable transcriptional regulatory protein Moth_1704 (Moorella thermoacetica (strain ATCC 39073 / JCM 9320)).